The primary structure comprises 573 residues: MTPESRDTTDLSPGGTQEMEGIVIVKVEEEDEEDHFQKERNKVESSPQVLSRSTTMNERALLSSYLVAYRVAKEKMAHTAAEKIILPACMDMVRTIFDDKSADKLRTIPLSDNTISRRICTIAKHLEAMLITRLQSGIDFAIQLDESTDIASCPTLLVYVRYVWQDDFVEDLLCCLNLNSHITGLDLFTELENCLLGQYKLNWKHCKGISSDGTANMTGKHSRLTEKLLEATHNNAVWNHCFIHREALVSKEISPSLMDVLKNAVKTVNFIKGSSLNSRLLEIFCSEIGVNHTHLLFHTEVRWLSQGKVLSRVYELRNEIYIFLVEKQSHLANIFEDDIWVTKLAYLSDIFGILNELSLKMQGKNNDIFQYLEHILGFQKTLLLWQARLKSNRPSYYMFPTLLQHIEENIINEDCLKEIKLEILLHLTSLSQTFNYYFPEEKFESLKENIWMKDPFAFQNPESIIELNLEPEEENELLQLSSSFTLKNYYKILSLSAFWIKIKDDFPLLSRKSILLLLPFTTTYLCELGFSILTRLKTKKRNRLNSAPDMRVALSSCVPDWKELMNRQAHPSH.

Positions 1-51 (MTPESRDTTDLSPGGTQEMEGIVIVKVEEEDEEDHFQKERNKVESSPQVLS) are disordered. Residues 1-513 (MTPESRDTTD…DDFPLLSRKS (513 aa)) lie on the Extracellular side of the membrane. A helical transmembrane segment spans residues 514-533 (ILLLLPFTTTYLCELGFSIL). Residues 534 to 573 (TRLKTKKRNRLNSAPDMRVALSSCVPDWKELMNRQAHPSH) lie on the Cytoplasmic side of the membrane.

This sequence belongs to the FAM200 family.

It localises to the membrane. This Homo sapiens (Human) protein is Protein FAM200A (FAM200A).